The sequence spans 507 residues: Dihydrolipoyllysine-residue acetyltransferase component of pyruvate dehydrogenase complex, mitochondrial (507 aa).

The Lipoyl-binding domain occupies 77–153 (HNRVALPALS…PIGKLLCIIV (77 aa)). At Lys-118 the chain carries N6-lipoyllysine. Disordered regions lie at residues 168–223 (DGAS…VSAS) and 248–270 (RILA…TQAV). The Peripheral subunit-binding (PSBD) domain occupies 221-258 (SASPFAKKLAAENGLDLSGVSGSGPGGRILASDLSQAP). Residues His-480 and Asp-484 contribute to the active site.

The protein belongs to the 2-oxoacid dehydrogenase family. It depends on (R)-lipoate as a cofactor.

It localises to the mitochondrion matrix. It catalyses the reaction N(6)-[(R)-dihydrolipoyl]-L-lysyl-[protein] + acetyl-CoA = N(6)-[(R)-S(8)-acetyldihydrolipoyl]-L-lysyl-[protein] + CoA. The pyruvate dehydrogenase complex catalyzes the overall conversion of pyruvate to acetyl-CoA and CO(2). It contains multiple copies of three enzymatic components: pyruvate dehydrogenase (E1), dihydrolipoamide acetyltransferase (E2) and lipoamide dehydrogenase (E3). The chain is Dihydrolipoyllysine-residue acetyltransferase component of pyruvate dehydrogenase complex, mitochondrial from Caenorhabditis elegans.